Here is a 726-residue protein sequence, read N- to C-terminus: Probable cadmium-transporting ATPase (726 aa).

Residues 11–74 (DKQVYRVEGF…AGAFENLKVF (64 aa)) form the HMA domain. Cys22 and Cys25 together coordinate Cd(2+). 5 helical membrane passes run 105–125 (STLLFATLLIAFGYLSHFVNG), 129–149 (LVTSMLFVGSIVIGGYSLFKV), 163–179 (TLMTVAVIGAAIIGEWA), 335–355 (IIMVIAALVAVVPPLFFGGSW), and 363–383 (LAVLVVGCPCALVISTPISIV). The active-site 4-aspartylphosphate intermediate is Asp414. The next 2 membrane-spanning stretches (helical) occupy residues 671–693 (LNIIKANITFAIGIKIIALLLVI) and 698–720 (TLWIAILSDMGATILVALNSLRL).

Belongs to the cation transport ATPase (P-type) (TC 3.A.3) family. Type IB subfamily.

The protein resides in the cell membrane. It carries out the reaction Cd(2+)(in) + ATP + H2O = Cd(2+)(out) + ADP + phosphate + H(+). Its function is as follows. Couples the hydrolysis of ATP with the export of cadmium. This is Probable cadmium-transporting ATPase (cadA) from Staphylococcus aureus (strain MRSA252).